The following is a 314-amino-acid chain: tRNA-cytidine(32) 2-sulfurtransferase (314 aa).

The short motif at 46-51 (SGGKDS) is the PP-loop motif element. Positions 121, 124, and 212 each coordinate [4Fe-4S] cluster.

It belongs to the TtcA family. Homodimer. It depends on Mg(2+) as a cofactor. The cofactor is [4Fe-4S] cluster.

The protein resides in the cytoplasm. The catalysed reaction is cytidine(32) in tRNA + S-sulfanyl-L-cysteinyl-[cysteine desulfurase] + AH2 + ATP = 2-thiocytidine(32) in tRNA + L-cysteinyl-[cysteine desulfurase] + A + AMP + diphosphate + H(+). The protein operates within tRNA modification. Its function is as follows. Catalyzes the ATP-dependent 2-thiolation of cytidine in position 32 of tRNA, to form 2-thiocytidine (s(2)C32). The sulfur atoms are provided by the cysteine/cysteine desulfurase (IscS) system. The sequence is that of tRNA-cytidine(32) 2-sulfurtransferase from Nitrosomonas europaea (strain ATCC 19718 / CIP 103999 / KCTC 2705 / NBRC 14298).